The sequence spans 145 residues: Basic phospholipase A2 PC17 (145 aa).

An N-terminal signal peptide occupies residues 1–21; sequence MYPAHLLLLLAVCVSLLGASA. Residues 22–27 constitute a propeptide that is removed on maturation; the sequence is IPPLPL. Cystine bridges form between C38-C98, C54-C144, C56-C72, C71-C125, C78-C118, C87-C111, and C105-C116. Positions 55, 57, and 59 each coordinate Ca(2+). H75 is a catalytic residue. D76 is a Ca(2+) binding site. Residue D119 is part of the active site.

Belongs to the phospholipase A2 family. Group I subfamily. D49 sub-subfamily. Ca(2+) serves as cofactor.

The protein resides in the secreted. It carries out the reaction a 1,2-diacyl-sn-glycero-3-phosphocholine + H2O = a 1-acyl-sn-glycero-3-phosphocholine + a fatty acid + H(+). In terms of biological role, PLA2 catalyzes the calcium-dependent hydrolysis of the 2-acyl groups in 3-sn-phosphoglycerides. In Laticauda laticaudata (Blue-ringed sea krait), this protein is Basic phospholipase A2 PC17.